The chain runs to 259 residues: Small ribosomal subunit protein uS2 (259 aa).

The interval 228–259 (VSFGSEEAEENNQKEDNEEIFEIEDVDESEEM) is disordered. Positions 233 to 259 (EEAEENNQKEDNEEIFEIEDVDESEEM) are enriched in acidic residues.

Belongs to the universal ribosomal protein uS2 family.

This is Small ribosomal subunit protein uS2 from Thermosipho africanus (strain TCF52B).